A 397-amino-acid polypeptide reads, in one-letter code: MRACINNQQIRHHNKCVILELLYRQKRANKSTLARLAQISIPAVSNILQELESEKRVVNIDDESQTRGHSSGTWLIAPEGDWTLCLNVTPTSIECQVANACLSPKGEFEYLQIDAPTPQALLSEIEKCWHRHRKLWPDHTINLALAIHGQVDPVTGVSQTMPQAPWTTPVEVKYLLEEKLGIRVMVDNDCVMLALAEKWQNNSQERDFCVINVDYGIGSSFVINEQIYRGSLYGSGQIGHTIVNPDGVVCDCGRYGCLETVASLSALKKQARVWLKSQPVSTQLDPEKLTTAQLIAAWQSGEPWITSWVDRSANAIGLSLYNFLNILNINQIWLYGRSCAFGENWLNTIIRQTGFNPFDRDEGPSVKATQIGFGQLSRAQQVLGIGYLYVEAQLRQI.

Belongs to the ROK (NagC/XylR) family.

This is an uncharacterized protein from Escherichia coli (strain K12).